A 245-amino-acid polypeptide reads, in one-letter code: Ribonuclease PH (245 aa).

Phosphate is bound by residues arginine 93 and 131–133 (GTR).

This sequence belongs to the RNase PH family. Homohexameric ring arranged as a trimer of dimers.

The catalysed reaction is tRNA(n+1) + phosphate = tRNA(n) + a ribonucleoside 5'-diphosphate. Its function is as follows. Phosphorolytic 3'-5' exoribonuclease that plays an important role in tRNA 3'-end maturation. Removes nucleotide residues following the 3'-CCA terminus of tRNAs; can also add nucleotides to the ends of RNA molecules by using nucleoside diphosphates as substrates, but this may not be physiologically important. Probably plays a role in initiation of 16S rRNA degradation (leading to ribosome degradation) during starvation. This Corynebacterium glutamicum (strain R) protein is Ribonuclease PH.